We begin with the raw amino-acid sequence, 673 residues long: UvrABC system protein B (673 aa).

One can recognise a Helicase ATP-binding domain in the interval E26–R183. Residue G39–T46 coordinates ATP. A Beta-hairpin motif is present at residues Y92–V115. A Helicase C-terminal domain is found at Q431 to L597. The region spanning Q633–L668 is the UVR domain.

It belongs to the UvrB family. Forms a heterotetramer with UvrA during the search for lesions. Interacts with UvrC in an incision complex.

It localises to the cytoplasm. In terms of biological role, the UvrABC repair system catalyzes the recognition and processing of DNA lesions. A damage recognition complex composed of 2 UvrA and 2 UvrB subunits scans DNA for abnormalities. Upon binding of the UvrA(2)B(2) complex to a putative damaged site, the DNA wraps around one UvrB monomer. DNA wrap is dependent on ATP binding by UvrB and probably causes local melting of the DNA helix, facilitating insertion of UvrB beta-hairpin between the DNA strands. Then UvrB probes one DNA strand for the presence of a lesion. If a lesion is found the UvrA subunits dissociate and the UvrB-DNA preincision complex is formed. This complex is subsequently bound by UvrC and the second UvrB is released. If no lesion is found, the DNA wraps around the other UvrB subunit that will check the other stand for damage. This is UvrABC system protein B from Citrobacter koseri (strain ATCC BAA-895 / CDC 4225-83 / SGSC4696).